The following is a 564-amino-acid chain: Ubiquitin carboxyl-terminal hydrolase 39 (564 aa).

A disordered region spans residues 1 to 96 (MSSRSKRQSH…VRAKNGRVDS (96 aa)). A compositionally biased stretch (basic and acidic residues) spans 28-39 (IKKERDREKEPE). Position 46 is a phosphoserine (Ser-46). Lys-51 participates in a covalent cross-link: Glycyl lysine isopeptide (Lys-Gly) (interchain with G-Cter in SUMO2). Over residues 59–69 (REVPAPALPVV) the composition is skewed to low complexity. Residue Ser-81 is modified to Phosphoserine. The span at 84-96 (EREVRAKNGRVDS) shows a compositional bias: basic and acidic residues. The segment at 102–199 (RHCPYLDTIN…YVLKPTFTKQ (98 aa)) adopts a UBP-type; degenerate zinc-finger fold. Zn(2+) is bound by residues Cys-135, Cys-138, His-154, and His-160. A USP domain is found at 224-554 (VGLNNIKAND…EAYIQIWKRR (331 aa)).

This sequence belongs to the peptidase C19 family. The U4/U6-U5 tri-snRNP complex is a building block of the precatalytic spliceosome (spliceosome B complex). Component of the U4/U6-U5 tri-snRNP complex composed of the U4, U6 and U5 snRNAs and at least PRPF3, PRPF4, PRPF6, PRPF8, PRPF31, SNRNP200, TXNL4A, SNRNP40, SNRPB, SNRPD1, SNRPD2, SNRPD3, SNRPE, SNRPF, SNRPG, DDX23, CD2BP2, PPIH, SNU13, EFTUD2, SART1 and USP39, plus LSM2, LSM3, LSM4, LSM5, LSM6, LSM7 and LSM8.

The protein resides in the nucleus. It catalyses the reaction Thiol-dependent hydrolysis of ester, thioester, amide, peptide and isopeptide bonds formed by the C-terminal Gly of ubiquitin (a 76-residue protein attached to proteins as an intracellular targeting signal).. In terms of biological role, deubiquitinating enzyme that plays a role in many cellular processes including cellular antiviral response, epithelial morphogenesis, DNA repair or B-cell development. Plays a role in pre-mRNA splicing as a component of the U4/U6-U5 tri-snRNP, one of the building blocks of the precatalytic spliceosome. Specifically regulates immunoglobulin gene rearrangement in a spliceosome-dependent manner, which involves modulating chromatin interactions at the Igh locus and therefore plays an essential role in B-cell development. Regulates AURKB mRNA levels, and thereby plays a role in cytokinesis and in the spindle checkpoint. Regulates apoptosis and G2/M cell cycle checkpoint in response to DNA damage by deubiquitinating and stabilizing CHK2. Also plays an important role in DNA repair by controlling the recruitment of XRCC4/LIG4 to DNA double-strand breaks for non-homologous end-joining repair. Participates in antiviral activity by affecting the type I IFN signaling by stabilizing STAT1 and decreasing its 'Lys-6'-linked ubiquitination. Contributes to non-canonical Wnt signaling during epidermal differentiation. Acts as a negative regulator NF-kappa-B activation through deubiquitination of 'Lys-48'-linked ubiquitination of NFKBIA. This chain is Ubiquitin carboxyl-terminal hydrolase 39, found in Mus musculus (Mouse).